The primary structure comprises 288 residues: Cell division protein ZipA (288 aa).

Position 1 (Met1) is a topological domain, periplasmic. Residues 2 to 22 (EIGLREWLIVIGIIVIAGILF) form a helical membrane-spanning segment. Over 23–288 (DGWRRMRGGK…ERRALTQRRG (266 aa)) the chain is Cytoplasmic. A disordered region spans residues 48–138 (DEEETTSAEV…DDKPAQRITE (91 aa)). Composition is skewed to basic and acidic residues over residues 64 to 77 (LDTH…EHDL), 85 to 105 (RDNK…KDEP), and 122 to 138 (ARDD…RITE).

It belongs to the ZipA family. As to quaternary structure, interacts with FtsZ via their C-terminal domains.

It is found in the cell inner membrane. Its function is as follows. Essential cell division protein that stabilizes the FtsZ protofilaments by cross-linking them and that serves as a cytoplasmic membrane anchor for the Z ring. Also required for the recruitment to the septal ring of downstream cell division proteins. In Pseudomonas syringae pv. tomato (strain ATCC BAA-871 / DC3000), this protein is Cell division protein ZipA.